Reading from the N-terminus, the 20-residue chain is Dahlein-5.3 (20 aa).

Expressed by the skin dorsal glands.

It is found in the secreted. Its function is as follows. Has no antimicrobial activity. Strongly inhibits the formation of NO by neuronal nitric oxide synthase at micromolar concentrations. In Ranoidea dahlii (Dahl's aquatic frog), this protein is Dahlein-5.3.